A 132-amino-acid chain; its full sequence is UPF0299 membrane protein YohJ (132 aa).

Helical transmembrane passes span 7 to 27, 31 to 51, 63 to 83, and 93 to 113; these read IIWQ…AGIF, LLPI…VLLA, GCYV…VGVM, and FGPV…VVSW.

The protein belongs to the UPF0299 family.

The protein localises to the cell inner membrane. In Salmonella arizonae (strain ATCC BAA-731 / CDC346-86 / RSK2980), this protein is UPF0299 membrane protein YohJ.